Here is a 222-residue protein sequence, read N- to C-terminus: Phosphoribosylformylglycinamidine synthase subunit PurQ (222 aa).

The Glutamine amidotransferase type-1 domain maps to 3–222; that stretch reads SAVIQLPGLN…LFESVLGRAA (220 aa). Catalysis depends on C86, which acts as the Nucleophile. Active-site residues include H196 and E198.

As to quaternary structure, part of the FGAM synthase complex composed of 1 PurL, 1 PurQ and 2 PurS subunits.

It localises to the cytoplasm. The catalysed reaction is N(2)-formyl-N(1)-(5-phospho-beta-D-ribosyl)glycinamide + L-glutamine + ATP + H2O = 2-formamido-N(1)-(5-O-phospho-beta-D-ribosyl)acetamidine + L-glutamate + ADP + phosphate + H(+). The enzyme catalyses L-glutamine + H2O = L-glutamate + NH4(+). The protein operates within purine metabolism; IMP biosynthesis via de novo pathway; 5-amino-1-(5-phospho-D-ribosyl)imidazole from N(2)-formyl-N(1)-(5-phospho-D-ribosyl)glycinamide: step 1/2. Part of the phosphoribosylformylglycinamidine synthase complex involved in the purines biosynthetic pathway. Catalyzes the ATP-dependent conversion of formylglycinamide ribonucleotide (FGAR) and glutamine to yield formylglycinamidine ribonucleotide (FGAM) and glutamate. The FGAM synthase complex is composed of three subunits. PurQ produces an ammonia molecule by converting glutamine to glutamate. PurL transfers the ammonia molecule to FGAR to form FGAM in an ATP-dependent manner. PurS interacts with PurQ and PurL and is thought to assist in the transfer of the ammonia molecule from PurQ to PurL. In Chelativorans sp. (strain BNC1), this protein is Phosphoribosylformylglycinamidine synthase subunit PurQ.